A 397-amino-acid chain; its full sequence is Lysophospholipid transporter LplT (397 aa).

A run of 11 helical transmembrane segments spans residues M16 to A36, V53 to A73, L91 to I111, L139 to A159, L164 to I184, L227 to L247, A253 to A273, T281 to V301, L305 to P325, N352 to P372, and V373 to W393.

This sequence belongs to the major facilitator superfamily. LplT (TC 2.A.1.42) family.

The protein resides in the cell inner membrane. Functionally, catalyzes the facilitated diffusion of 2-acyl-glycero-3-phosphoethanolamine (2-acyl-GPE) into the cell. This Klebsiella pneumoniae subsp. pneumoniae (strain ATCC 700721 / MGH 78578) protein is Lysophospholipid transporter LplT.